The chain runs to 662 residues: Chaperone protein dnaK1 (662 aa).

The residue at position 198 (threonine 198) is a Phosphothreonine; by autocatalysis. The segment at 630–662 is disordered; sequence DWDDDPWAAPSGPPRGRSLNRRDRDPWDDDFYR. A compositionally biased stretch (basic and acidic residues) spans 649–662; it reads NRRDRDPWDDDFYR.

It belongs to the heat shock protein 70 family.

Functionally, acts as a chaperone. The chain is Chaperone protein dnaK1 (dnaK1) from Parasynechococcus marenigrum (strain WH8102).